The following is a 208-amino-acid chain: 3-demethoxyubiquinol 3-hydroxylase (208 aa).

Residues glutamate 57, glutamate 87, histidine 90, glutamate 139, glutamate 171, and histidine 174 each coordinate Fe cation.

Belongs to the COQ7 family. The cofactor is Fe cation.

Its subcellular location is the cell membrane. It catalyses the reaction a 5-methoxy-2-methyl-3-(all-trans-polyprenyl)benzene-1,4-diol + AH2 + O2 = a 3-demethylubiquinol + A + H2O. Its pathway is cofactor biosynthesis; ubiquinone biosynthesis. Catalyzes the hydroxylation of 2-nonaprenyl-3-methyl-6-methoxy-1,4-benzoquinol during ubiquinone biosynthesis. This is 3-demethoxyubiquinol 3-hydroxylase from Burkholderia cenocepacia (strain ATCC BAA-245 / DSM 16553 / LMG 16656 / NCTC 13227 / J2315 / CF5610) (Burkholderia cepacia (strain J2315)).